Consider the following 328-residue polypeptide: Formimidoylglutamase (328 aa).

Mn(2+) contacts are provided by histidine 133, aspartate 159, histidine 161, aspartate 163, aspartate 253, and aspartate 255.

This sequence belongs to the arginase family. The cofactor is Mn(2+).

It catalyses the reaction N-formimidoyl-L-glutamate + H2O = formamide + L-glutamate. The protein operates within amino-acid degradation; L-histidine degradation into L-glutamate; L-glutamate from N-formimidoyl-L-glutamate (hydrolase route): step 1/1. Its function is as follows. Catalyzes the conversion of N-formimidoyl-L-glutamate to L-glutamate and formamide. In Streptococcus pyogenes serotype M5 (strain Manfredo), this protein is Formimidoylglutamase.